The following is a 453-amino-acid chain: Citrate (Re)-synthase (453 aa).

Positions 46 to 316 (IYITDTTFRD…TKNMKLHVIT (271 aa)) constitute a Pyruvate carboxyltransferase domain.

Belongs to the alpha-IPM synthase/homocitrate synthase family. Mn(2+) serves as cofactor. Co(2+) is required as a cofactor. The cofactor is Mg(2+).

It catalyses the reaction oxaloacetate + acetyl-CoA + H2O = citrate + CoA + H(+). Inhibited by p-chloromercuribenzoate (pCMB), EDTA, Zn(2+) ions, and under aerobic conditions. Its function is as follows. Catalyzes the condensation of the acetyl group of acetyl-CoA with oxaloacetate to form citrate. This enzyme is highly Re-face stereospecific with respect to the C-2 of oxaloacetate. The polypeptide is Citrate (Re)-synthase (Clostridium kluyveri (strain ATCC 8527 / DSM 555 / NBRC 12016 / NCIMB 10680 / K1)).